Consider the following 224-residue polypeptide: UPF0758 protein CBUD_1789 (224 aa).

The 123-residue stretch at 102–224 (QLGCTQDAQQ…SFSFAESGLL (123 aa)) folds into the MPN domain. Zn(2+) is bound by residues His173, His175, and Asp186. Positions 173 to 186 (HNHPSGVPDPSQAD) match the JAMM motif motif.

It belongs to the UPF0758 family.

The polypeptide is UPF0758 protein CBUD_1789 (Coxiella burnetii (strain Dugway 5J108-111)).